The chain runs to 602 residues: Potassium-transporting ATPase potassium-binding subunit (602 aa).

The next 4 membrane-spanning stretches (helical) occupy residues 5-25, 65-85, 136-156, and 179-199; these read AMLQLGLFLVVLIALAWPLGA, GYAVALILFNVLGVAAVYALQ, GLTVQNFVSAATGAAVVIALI, and LYVLLPLAVVFALVFTQQGAI. The interval 221 to 248 is disordered; it reads QDAKGNPVLGKDGKPVMEDKTSQTQTLP. Basic and acidic residues predominate over residues 231-241; sequence KDGKPVMEDKT. 6 helical membrane-spanning segments follow: residues 283-303, 312-332, 419-439, 458-478, 523-543, and 566-586; these read LANFLQDIAIFLIPAALCFLF, QGWAILAAMTIMFATAVVVET, GLYGMLIFAILAVFIAGLMVG, AITILVTPTLVLALTAIAVSL, IMTGLAMFFGRFFMIVPILAI, and LFVTLLIGTVLLVGALNYVPA.

It belongs to the KdpA family. The system is composed of three essential subunits: KdpA, KdpB and KdpC.

Its subcellular location is the cell inner membrane. Functionally, part of the high-affinity ATP-driven potassium transport (or Kdp) system, which catalyzes the hydrolysis of ATP coupled with the electrogenic transport of potassium into the cytoplasm. This subunit binds the periplasmic potassium ions and delivers the ions to the membrane domain of KdpB through an intramembrane tunnel. The protein is Potassium-transporting ATPase potassium-binding subunit of Chromobacterium violaceum (strain ATCC 12472 / DSM 30191 / JCM 1249 / CCUG 213 / NBRC 12614 / NCIMB 9131 / NCTC 9757 / MK).